We begin with the raw amino-acid sequence, 362 residues long: Putative F-box protein At3g25750 (362 aa).

In terms of domain architecture, F-box spans 4 to 52 (TEWSDLPEELLDLIANRYSSNIDVLRIRSTCKSWRSAVAMSKERLQFRF).

This is Putative F-box protein At3g25750 from Arabidopsis thaliana (Mouse-ear cress).